A 327-amino-acid polypeptide reads, in one-letter code: Short chain isoprenyl diphosphate synthase (327 aa).

Isopentenyl diphosphate-binding residues include Lys-48, Arg-51, and His-80. Mg(2+)-binding residues include Asp-87 and Asp-91. Residue Arg-96 participates in an all-trans-polyprenyl diphosphate binding. Arg-97 is a binding site for isopentenyl diphosphate. Lys-176, Thr-177, Gln-214, Lys-231, and Lys-241 together coordinate an all-trans-polyprenyl diphosphate.

It belongs to the FPP/GGPP synthase family. In terms of assembly, homodimer. The cofactor is Mg(2+).

Its subcellular location is the cytoplasm. The sequence is that of Short chain isoprenyl diphosphate synthase (idsA) from Methanocaldococcus jannaschii (strain ATCC 43067 / DSM 2661 / JAL-1 / JCM 10045 / NBRC 100440) (Methanococcus jannaschii).